The primary structure comprises 116 residues: G antigen 10 (116 aa).

The segment at 1 to 116 (MSWRGRSTYR…PEEGEKQSQC (116 aa)) is disordered. Residues 31–44 (FSDEVEPATPEEGE) are compositionally biased toward acidic residues. Basic and acidic residues-rich tracts occupy residues 71–80 (PEADSQEQVH) and 102–116 (EEVK…QSQC).

Belongs to the GAGE family.

In Homo sapiens (Human), this protein is G antigen 10 (GAGE10).